The sequence spans 160 residues: Aspartate carbamoyltransferase regulatory chain (160 aa).

Residues Cys-110, Cys-115, Cys-140, and Cys-143 each coordinate Zn(2+).

It belongs to the PyrI family. In terms of assembly, contains catalytic and regulatory chains. Zn(2+) serves as cofactor.

In terms of biological role, involved in allosteric regulation of aspartate carbamoyltransferase. This is Aspartate carbamoyltransferase regulatory chain from Hyperthermus butylicus (strain DSM 5456 / JCM 9403 / PLM1-5).